Consider the following 1254-residue polypeptide: Structural polyprotein (1254 aa).

The host transcription inhibition stretch occupies residues 43-77 (LQAQQMQQLISAVSALTTKQNVKAPKGQRKQKQQK). The interval 60–112 (TKQNVKAPKGQRKQKQQKPKEKKEKQKKKPTXKKKQQQKPKPQAKKKKPGRRE) is disordered. A Nuclear localization signal motif is present at residues 70-108 (QRKQKQQKPKEKKEKQKKKPTXKKKQQQKPKPQAKKKKP). The span at 84–110 (KQKKKPTXKKKQQQKPKPQAKKKKPGR) shows a compositional bias: basic residues. The tract at residues 95–123 (QQQKPKPQAKKKKPGRRERMCMKIENDCI) is binding to the viral RNA. The ribosome-binding stretch occupies residues 108-122 (PGRRERMCMKIENDC). Cys-122 and Cys-137 are oxidised to a cystine. One can recognise a Peptidase S3 domain in the interval 122–270 (CIFEVKLDGK…RVTPEGTEEW (149 aa)). His-148 serves as the catalytic Charge relay system. The Nuclear export signal signature appears at 153-163 (IDNPDLAKLTY). Residues 164 to 169 (KKSSKY) form an interaction with spike glycoprotein E2 region. Asp-170 serves as the catalytic Charge relay system. Residues 192–202 (PEGHYNWHHGA) form a dimerization of the capsid protein region. The active-site Charge relay system is the Ser-222. Positions 228–232 (DNKGR) are dimerization of the capsid protein. Over 270–694 (WSAALMMCIL…PHEIIQYYYG (425 aa)) the chain is Extracellular. Residues 271–282 (SAALMMCILANT) are functions as an uncleaved signal peptide for the precursor of protein E3/E2. 3 disulfide bridges follow: Cys-277/Cys-286, Cys-291/Cys-295, and Cys-294/Cys-326. A glycan (N-linked (GlcNAc...) asparagine; by host) is linked at Asn-281. N-linked (GlcNAc...) asparagine; by host glycosylation occurs at Asn-328. Disulfide bonds link Cys-353–Cys-459, Cys-356–Cys-362, Cys-425–Cys-439, Cys-487–Cys-599, Cys-535–Cys-559, and Cys-537–Cys-554. 2 interaction with host Mxra8 receptor regions span residues 360-363 (YFCY) and 396-398 (HAH). The interval 518 to 521 (TAGN) is interaction with host Mxra8 receptor. Asn-534 carries an N-linked (GlcNAc...) asparagine; by host glycan. Positions 550–556 (TINTCKI) are interaction with host Mxra8 receptor. Asn-596 carries an N-linked (GlcNAc...) asparagine; by host glycan. The chain crosses the membrane as a helical span at residues 695–715 (LYPAATIAAVSGASLMALLTL). Over 716 to 756 (AATCCMLATARRKCLTPYALTPGAVVPLTLGLLXCAPRANA) the chain is Cytoplasmic. Cys-719 carries S-palmitoyl cysteine; by host lipidation. The segment at 724–728 (TARRK) is interaction with the capsid protein. S-palmitoyl cysteine; by host attachment occurs at residues Cys-729 and Cys-750. Residues 729-749 (CLTPYALTPGAVVPLTLGLLX) are transient transmembrane before p62-6K protein processing. Cys-729 and Cys-750 are oxidised to a cystine. Over 757-771 (ASFAETMAYLWDENK) the chain is Extracellular. A helical membrane pass occupies residues 772-792 (TLFWMEXXXXXXALALLACCI). A topological domain (cytoplasmic) is located at residue Lys-793. A helical transmembrane segment spans residues 794–814 (SLICCCKPFSFLVLLSLGASA). Residues 815-1231 (KAYEHTATIP…AMTWVQRMAS (417 aa)) lie on the Extracellular side of the membrane. Cystine bridges form between Cys-865–Cys-930, Cys-878–Cys-910, Cys-879–Cys-912, and Cys-884–Cys-894. An E1 fusion peptide loop region spans residues 900–917 (VYPFMWGGAYCFCDSENT). N-linked (GlcNAc...) asparagine; by host glycosylation is present at Asn-957. 4 disulfide bridges follow: Cys-1075–Cys-1087, Cys-1117–Cys-1192, Cys-1122–Cys-1196, and Cys-1144–Cys-1186. A helical membrane pass occupies residues 1232-1252 (GLGGLALIAVVVLVLVTCITM). Cys-1249 is lipidated: S-palmitoyl cysteine; by host. Cys-1249 carries the S-stearoyl cysteine; by host lipid modification. Residues 1253-1254 (RR) are Cytoplasmic-facing.

Homodimer. Homomultimer. Interacts with host karyopherin KPNA4; this interaction allows the nuclear import of the viral capsid protein. Interacts with spike glycoprotein E2. Interacts with host IRAK1; the interaction leads to inhibition of IRAK1-dependent signaling. As to quaternary structure, the precursor of protein E3/E2 and E1 form a heterodimer shortly after synthesis. In terms of assembly, the precursor of protein E3/E2 and E1 form a heterodimer shortly after synthesis. Processing of the precursor of protein E3/E2 into E2 and E3 results in a heterodimer of the spike glycoproteins E2 and E1. Spike at virion surface are constituted of a trimer of E2-E1 heterodimers. After target cell attachment and endocytosis, E1 change conformation to form homotrimers. Interacts with 6K protein. Interacts with spike glycoprotein E1. Processing of the precursor of protein E3/E2 into E2 and E3 results in a heterodimer of the spike glycoproteins E2 and E1. Spike at virion surface are constituted of a trimer of E2-E1 heterodimers. Interacts with 6K protein. Interacts with host MXRA8; this interaction mediates virus entry. Structural polyprotein: Specific enzymatic cleavages in vivo yield mature proteins. Capsid protein is auto-cleaved during polyprotein translation, unmasking a signal peptide at the N-terminus of the precursor of E3/E2. The remaining polyprotein is then targeted to the host endoplasmic reticulum, where host signal peptidase cleaves it into pE2, 6K and E1 proteins. pE2 is further processed to mature E3 and E2 by host furin in trans-Golgi vesicle. Post-translationally, palmitoylated via thioester bonds. These palmitoylations may induce disruption of the C-terminus transmembrane. This would result in the reorientation of E2 C-terminus from lumenal to cytoplasmic side. In terms of processing, N-glycosylated. Palmitoylated via thioester bonds.

It localises to the virion. Its subcellular location is the host cytoplasm. It is found in the host cell membrane. The protein localises to the host nucleus. The protein resides in the virion membrane. It localises to the host Golgi apparatus. Its subcellular location is the host trans-Golgi network. It is found in the host endoplasmic reticulum. It carries out the reaction Autocatalytic release of the core protein from the N-terminus of the togavirus structural polyprotein by hydrolysis of a -Trp-|-Ser- bond.. Functionally, forms an icosahedral capsid with a T=4 symmetry composed of 240 copies of the capsid protein surrounded by a lipid membrane through which penetrate 80 spikes composed of trimers of E1-E2 heterodimers. The capsid protein binds to the viral RNA genome at a site adjacent to a ribosome binding site for viral genome translation following genome release. Possesses a protease activity that results in its autocatalytic cleavage from the nascent structural protein. Following its self-cleavage, the capsid protein transiently associates with ribosomes, and within several minutes the protein binds to viral RNA and rapidly assembles into icosahedric core particles. The resulting nucleocapsid eventually associates with the cytoplasmic domain of the spike glycoprotein E2 at the cell membrane, leading to budding and formation of mature virions. In case of infection, new virions attach to target cells and after clathrin-mediated endocytosis their membrane fuses with the host endosomal membrane. This leads to the release of the nucleocapsid into the cytoplasm, followed by an uncoating event necessary for the genomic RNA to become accessible. The uncoating might be triggered by the interaction of capsid proteins with ribosomes. Binding of ribosomes would release the genomic RNA since the same region is genomic RNA-binding and ribosome-binding. Specifically inhibits interleukin-1 receptor-associated kinase 1/IRAK1-dependent signaling during viral entry, representing a means by which the alphaviruses may evade innate immune detection and activation prior to viral gene expression. Its function is as follows. Provides the signal sequence for the translocation of the precursor of protein E3/E2 to the host endoplasmic reticulum. Furin-cleaved E3 remains associated with spike glycoprotein E1 and mediates pH protection of the latter during the transport via the secretory pathway. After virion release from the host cell, the assembly protein E3 is gradually released in the extracellular space. Plays a role in viral attachment to target host cell, by binding to the cell receptor MXRA8. The host LDLR may also act as a cell receptor for viral entry. Synthesized as a p62 precursor which is processed by furin at the cell membrane just before virion budding, giving rise to E2-E1 heterodimer. The p62-E1 heterodimer is stable, whereas E2-E1 is unstable and dissociate at low pH. p62 is processed at the last step, presumably to avoid E1 fusion activation before its final export to cell surface. E2 C-terminus contains a transitory transmembrane that would be disrupted by palmitoylation, resulting in reorientation of the C-terminal tail from lumenal to cytoplasmic side. This step is critical since E2 C-terminus is involved in budding by interacting with capsid proteins. This release of E2 C-terminus in cytoplasm occurs lately in protein export, and precludes premature assembly of particles at the endoplasmic reticulum membrane. In terms of biological role, acts as a viroporin that participates in virus glycoprotein processing and transport to the plasma membrane, cell permeabilization and budding of viral particles. The cation channel is permeable to Na(+)&gt;K(+)&gt;Ca(2+) in vitro. Disrupts the calcium homeostasis of the cell, probably at the endoplasmic reticulum level. This leads to cytoplasmic calcium elevation. Because of its lipophilic properties, the 6K protein is postulated to influence the selection of lipids that interact with the transmembrane domains of the glycoproteins, which, in turn, affects the deformability of the bilayer required for the extreme curvature that occurs as budding proceeds. Present in low amount in virions, about 3% compared to viral glycoproteins. Functionally, class II viral fusion protein. Fusion activity is inactive as long as E1 is bound to E2 in mature virion. After virus attachment to target cell via host MXRA8 and endocytosis, acidification of the endosome induce dissociation of E1/E2 heterodimer and concomitant trimerization of the E1 subunits. This E1 trimer is fusion active, and promotes release of viral nucleocapsid in cytoplasm after endosome and viral membrane fusion. Efficient fusion requires the presence of cholesterol and sphingolipid in the target membrane. The chain is Structural polyprotein from Ross river virus (strain NB5092) (RRV).